The primary structure comprises 222 residues: (4-{4-[2-(gamma-L-glutamylamino)ethyl]phenoxymethyl}furan-2-yl)methanamine synthase (222 aa).

Belongs to the MfnF family.

The catalysed reaction is gamma-L-glutamyltyramine + [5-(aminomethyl)furan-3-yl]methyl diphosphate = (4-{4-[2-(gamma-L-glutamylamino)ethyl]phenoxymethyl}furan-2-yl)methanamine + diphosphate. Its pathway is cofactor biosynthesis; methanofuran biosynthesis. Its function is as follows. Catalyzes the condensation between 5-(aminomethyl)-3-furanmethanol diphosphate (F1-PP) and gamma-glutamyltyramine to produce APMF-Glu. In Methanococcus vannielii, this protein is (4-{4-[2-(gamma-L-glutamylamino)ethyl]phenoxymethyl}furan-2-yl)methanamine synthase.